Reading from the N-terminus, the 475-residue chain is UDP-N-acetylmuramate--L-alanine ligase (475 aa).

Residue 114 to 120 coordinates ATP; the sequence is GTHGKTT.

The protein belongs to the MurCDEF family.

The protein localises to the cytoplasm. It catalyses the reaction UDP-N-acetyl-alpha-D-muramate + L-alanine + ATP = UDP-N-acetyl-alpha-D-muramoyl-L-alanine + ADP + phosphate + H(+). It functions in the pathway cell wall biogenesis; peptidoglycan biosynthesis. Cell wall formation. This chain is UDP-N-acetylmuramate--L-alanine ligase, found in Bartonella henselae (strain ATCC 49882 / DSM 28221 / CCUG 30454 / Houston 1) (Rochalimaea henselae).